Reading from the N-terminus, the 156-residue chain is Ribonuclease pancreatic (156 aa).

The signal sequence occupies residues 1–28 (MALEKSLVLLPLFVLMLLVLGWVQPSLG). 2 residues coordinate substrate: K35 and R38. The active-site Proton acceptor is the H40. N50 and N62 each carry an N-linked (GlcNAc...) asparagine glycan. Cystine bridges form between C54–C112, C68–C123, C86–C138, and C93–C100. Substrate-binding positions include 69–73 (KPVNT) and K94. N104 carries an N-linked (GlcNAc...) asparagine glycan. Substrate is bound at residue R113. N116 carries an N-linked (GlcNAc...) asparagine glycan. The active-site Proton donor is the H147.

Belongs to the pancreatic ribonuclease family. Monomer. Interacts with and forms tight 1:1 complexes with RNH1. Dimerization of two such complexes may occur. Interaction with RNH1 inhibits this protein.

The protein localises to the secreted. It carries out the reaction an [RNA] containing cytidine + H2O = an [RNA]-3'-cytidine-3'-phosphate + a 5'-hydroxy-ribonucleotide-3'-[RNA].. The enzyme catalyses an [RNA] containing uridine + H2O = an [RNA]-3'-uridine-3'-phosphate + a 5'-hydroxy-ribonucleotide-3'-[RNA].. Functionally, endonuclease that catalyzes the cleavage of RNA on the 3' side of pyrimidine nucleotides. Acts on single-stranded and double-stranded RNA. In Nomascus leucogenys (Northern white-cheeked gibbon), this protein is Ribonuclease pancreatic (RNASE1).